The following is a 236-amino-acid chain: MTTPANTTQAVGSTKSTTTTTAGATPANSGLFTIPDGDFFSTAKAVVASNAVATNEDLAKIQEIWKDKKIPSDTMAQAAWDLVRHCADVGSSAQTEMIGTGPYSNGVSRARLAAAIKEVCTLRQFCKKYAPVVWNWMLTNNSPPANWQAQGFKPEHKFAAFDFFDGVTNPAAITPKEGLMRPPSEAEMNAAQTAAFVKITKARAQSNDFASLDAAVTRGRITGTTVAEAVVSLPPP.

Residues methionine 1 to alanine 27 form a disordered region. The segment covering threonine 7–alanine 27 has biased composition (low complexity).

This sequence belongs to the potexvirus capsid protein family.

The protein localises to the virion. Required for genome encapsidation. Forms ribonucleoprotein complexes along with TGB1 helicase and viral RNA. In Brassica campestris (Field mustard), this protein is Coat protein.